We begin with the raw amino-acid sequence, 366 residues long: tRNA/tmRNA (uracil-C(5))-methyltransferase (366 aa).

The S-adenosyl-L-methionine site is built by glutamine 190, tyrosine 218, asparagine 223, glutamate 239, and aspartate 299. The Nucleophile role is filled by cysteine 324. Glutamate 358 serves as the catalytic Proton acceptor.

This sequence belongs to the class I-like SAM-binding methyltransferase superfamily. RNA M5U methyltransferase family. TrmA subfamily.

The catalysed reaction is uridine(54) in tRNA + S-adenosyl-L-methionine = 5-methyluridine(54) in tRNA + S-adenosyl-L-homocysteine + H(+). It catalyses the reaction uridine(341) in tmRNA + S-adenosyl-L-methionine = 5-methyluridine(341) in tmRNA + S-adenosyl-L-homocysteine + H(+). Dual-specificity methyltransferase that catalyzes the formation of 5-methyluridine at position 54 (m5U54) in all tRNAs, and that of position 341 (m5U341) in tmRNA (transfer-mRNA). This chain is tRNA/tmRNA (uracil-C(5))-methyltransferase, found in Salmonella paratyphi C (strain RKS4594).